Reading from the N-terminus, the 281-residue chain is Cytosolic Fe-S cluster assembly factor CFD1 (281 aa).

Residue 24–31 (GKGGVGKS) coordinates ATP. 2 residues coordinate [4Fe-4S] cluster: C201 and C204.

This sequence belongs to the Mrp/NBP35 ATP-binding proteins family. NUBP2/CFD1 subfamily. As to quaternary structure, heterotetramer of 2 NBP35 and 2 CFD1 chains. [4Fe-4S] cluster is required as a cofactor.

It is found in the cytoplasm. Its function is as follows. Component of the cytosolic iron-sulfur (Fe/S) protein assembly (CIA) machinery. Required for maturation of extramitochondrial Fe-S proteins. The NBP35-CFD1 heterotetramer forms a Fe-S scaffold complex, mediating the de novo assembly of an Fe-S cluster and its transfer to target apoproteins. Required for biogenesis and export of both ribosomal subunits, which may reflect a role in assembly of the Fe/S clusters in RLI1, a protein which performs rRNA processing and ribosome export. The sequence is that of Cytosolic Fe-S cluster assembly factor CFD1 from Eremothecium gossypii (strain ATCC 10895 / CBS 109.51 / FGSC 9923 / NRRL Y-1056) (Yeast).